A 430-amino-acid polypeptide reads, in one-letter code: Corticosteroid-binding globulin (430 aa).

The first 22 residues, 1–22 (MLLTLYTCLLWLSTSGLWTIQA), serve as a signal peptide directing secretion. N-linked (GlcNAc...) asparagine glycosylation is found at N119, N175, and N243. Q253 is a binding site for cortisol. N-linked (GlcNAc...) asparagine glycosylation occurs at N259. Q285 contributes to the cortisol binding site. N326 is a glycosylation site (N-linked (GlcNAc...) asparagine). W392 is a cortisol binding site.

This sequence belongs to the serpin family. In terms of tissue distribution, expressed by the liver; secreted in plasma.

The protein resides in the secreted. Its function is as follows. Major transport protein for glucocorticoids and progestins in the blood of almost all vertebrate species. In Ovis aries (Sheep), this protein is Corticosteroid-binding globulin (SERPINA6).